Consider the following 118-residue polypeptide: UPF0449 protein C19orf25 (118 aa).

Position 63 is a phosphotyrosine (Tyr-63). Residues 81–109 (NVLRQRCELLQRAGEDLEREVAQMKQAAL) adopt a coiled-coil conformation.

This sequence belongs to the UPF0449 family.

In Homo sapiens (Human), this protein is UPF0449 protein C19orf25 (C19orf25).